Consider the following 130-residue polypeptide: Glycine cleavage system H protein (130 aa).

In terms of domain architecture, Lipoyl-binding spans 28–110 (TVRIGITSVA…FGEGWLFEVE (83 aa)). K69 carries the post-translational modification N6-lipoyllysine.

The protein belongs to the GcvH family. The glycine cleavage system is composed of four proteins: P, T, L and H. Requires (R)-lipoate as cofactor.

In terms of biological role, the glycine cleavage system catalyzes the degradation of glycine. The H protein shuttles the methylamine group of glycine from the P protein to the T protein. In Corynebacterium aurimucosum (strain ATCC 700975 / DSM 44827 / CIP 107346 / CN-1) (Corynebacterium nigricans), this protein is Glycine cleavage system H protein.